Consider the following 111-residue polypeptide: Disintegrin lebein-1-alpha (111 aa).

The N-terminal stretch at 1 to 20 (MIQVLLVTICLAVFPYQGSS) is a signal peptide. A propeptide spanning residues 21-47 (IILESGNVNDYEIVYPKKVTVLPTGAM) is cleaved from the precursor. The 65-residue stretch at 47–111 (MNSGNPCCDP…SDCPRNPYKD (65 aa)) folds into the Disintegrin domain. 4 disulfides stabilise this stretch: Cys-53-Cys-76, Cys-67-Cys-73, Cys-72-Cys-97, and Cys-85-Cys-104. The short motif at 89–91 (RGD) is the Cell attachment site element.

It belongs to the disintegrin family. Dimeric disintegrin subfamily. Heterodimer with subunit beta; disulfide-linked. As to expression, expressed by the venom gland.

It localises to the secreted. Functionally, strongly inhibits ADP-induced platelet aggregation on human platelet-rich plasma. Also avidly binds to the laminin-binding beta-1 integrins (alpha-3/beta-1, alpha-6/beta-1, and alpha-7/beta-1) in an RGD-independent manner. This is Disintegrin lebein-1-alpha from Macrovipera lebetinus (Levantine viper).